A 644-amino-acid polypeptide reads, in one-letter code: Exoribonuclease 2 (644 aa).

Positions Arg-189 to Thr-516 constitute an RNB domain. In terms of domain architecture, S1 motif spans Asp-561–Val-643.

The protein belongs to the RNR ribonuclease family. RNase II subfamily.

The protein resides in the cytoplasm. It catalyses the reaction Exonucleolytic cleavage in the 3'- to 5'-direction to yield nucleoside 5'-phosphates.. In terms of biological role, involved in mRNA degradation. Hydrolyzes single-stranded polyribonucleotides processively in the 3' to 5' direction. The chain is Exoribonuclease 2 from Yersinia pseudotuberculosis serotype O:3 (strain YPIII).